Here is a 651-residue protein sequence, read N- to C-terminus: Readthrough protein P3-RTD (651 aa).

Disordered stretches follow at residues 1–25 (MNSV…RRTV), 33–52 (PNRA…GGAN), 201–239 (XVDS…VPKR), 525–552 (DVLP…KEPE), and 606–626 (NRSP…MTRE). A compositionally biased stretch (basic residues) spans 37–48 (GPRRRNGRRKGR). The segment at 202–650 (VDSSTPEPKP…TAAKAYKAQF (449 aa)) is readthrough domain (RTD). Positions 208–236 (EPKPAPEPTPTPQPTPAPQPTPEPTPAPV) are enriched in pro residues. A compositionally biased stretch (polar residues) spans 531–543 (EQLSSKPMDTSGN). Residues 608-621 (SPTTPTAPSVSTTS) are compositionally biased toward low complexity.

Belongs to the luteoviruses readthrough protein family. In terms of processing, in virus particles, more than 200 amino acids are proteolytically cleaved releasing the C-terminus part of the RTD domain. The cleaved product remains attached to the virus particle.

It localises to the membrane. The protein localises to the virion. The protein resides in the host cell junction. Its subcellular location is the host plasmodesma. It is found in the host periplasm. Minor component of the viral capsid involved in aphid transmission and virus accumulation in the host. Required fro the virus to move through the aphid. The RTD domain of the protein is exposed on the surface of the particle and determines the vector specificity and intestinal tropism in the aphid. In Avena byzantina (Oat), this protein is Readthrough protein P3-RTD.